A 92-amino-acid polypeptide reads, in one-letter code: uncharacterized protein (92 aa).

This is an uncharacterized protein from Pasteurella multocida (strain Pm70).